Reading from the N-terminus, the 294-residue chain is Foldase protein PrsA 1 (294 aa).

The signal sequence occupies residues 1 to 21 (MTKLKKVMISLVAATLLLLAG). Cys22 carries the N-palmitoyl cysteine lipid modification. The S-diacylglycerol cysteine moiety is linked to residue Cys22. A PpiC domain is found at 135–226 (EPNITVRHIL…YGYHLIQLVK (92 aa)).

It belongs to the PrsA family.

The protein resides in the cell membrane. The catalysed reaction is [protein]-peptidylproline (omega=180) = [protein]-peptidylproline (omega=0). In terms of biological role, plays a major role in protein secretion by helping the post-translocational extracellular folding of several secreted proteins. The polypeptide is Foldase protein PrsA 1 (prsA1) (Listeria innocua serovar 6a (strain ATCC BAA-680 / CLIP 11262)).